The primary structure comprises 202 residues: ATP synthase subunit b 1 (202 aa).

The chain crosses the membrane as a helical span at residues isoleucine 17–glycine 37.

It belongs to the ATPase B chain family. As to quaternary structure, F-type ATPases have 2 components, F(1) - the catalytic core - and F(0) - the membrane proton channel. F(1) has five subunits: alpha(3), beta(3), gamma(1), delta(1), epsilon(1). F(0) has three main subunits: a(1), b(2) and c(10-14). The alpha and beta chains form an alternating ring which encloses part of the gamma chain. F(1) is attached to F(0) by a central stalk formed by the gamma and epsilon chains, while a peripheral stalk is formed by the delta and b chains.

The protein localises to the cell inner membrane. F(1)F(0) ATP synthase produces ATP from ADP in the presence of a proton or sodium gradient. F-type ATPases consist of two structural domains, F(1) containing the extramembraneous catalytic core and F(0) containing the membrane proton channel, linked together by a central stalk and a peripheral stalk. During catalysis, ATP synthesis in the catalytic domain of F(1) is coupled via a rotary mechanism of the central stalk subunits to proton translocation. Functionally, component of the F(0) channel, it forms part of the peripheral stalk, linking F(1) to F(0). This Syntrophus aciditrophicus (strain SB) protein is ATP synthase subunit b 1.